An 804-amino-acid polypeptide reads, in one-letter code: MGDFNSNEDNNNPFNNVLYNPYIVDLYDTTNNNNNNNNNNNIISGFNCDSSIFTQQISNTNNELTIPLTQSIQNLLPPVQQQTQLFISPNNNNNNNNNNNNNNNNNNNNNNNNNNNNNNNNNNNNNNNNNNNNNNNNNNNNNNNNDINTSIDINLNQLVYSTPSQQITNSVQPIYQCATQSTTSNIDTNINTINDNNNNNNNNNNNNNNSVNNNLLSMCQDPTLILQIQQLLLQQQLLQQAQQQSVPLNIQVPTTTTPINQQHQALLVPQQKQFYGNVSDNSSPETNFSYASPSSPSSTQSQSSPYEQQPLSPNPTISLSSSISVTATTTTRPNATEKTKESSLKSKSKSNEKDKEREDEEEDDDDRPKKRKKFDKNVYKGVDLGDELLEITSEEFQAYKNNFFANASDKKTVSALNYQFRKIKNRESARRSRERKATHVDELEAKIAEIEKERDNYKKENERLRMELDQYKLQEKQKSAGSIFDYISIGSPTTQNFSKNFGIILFLFLFGSFILTNTTPNFFNTNNGVINPNLVYNANSNNNNNNNNNVNRFSVNGVHSTQQYFQSQRNPLSNLDEDSLESLTASQGVFSTHFVPEQPSILLNRESIRNWATLPQNSVASLSFEKDNALKTIENANLDKSKHNVISNLNQLQQQQPSSDELMIDQKEEKNCNNNNENNNNNDNNKNSDDEKGKEIEEIKRKSTTTTISPTRYVNNSTISLLVNPTSVIGDIPDDLMKNSNVTTFGENSSFKFNFLIDTQNFPNGSNDISKAFFDNENQQMTVTSVIIAIQKSPKTPSQQPSTK.

Disordered regions lie at residues 86–148 (FISP…NDIN) and 275–371 (YGNV…PKKR). The span at 90–145 (NNNNNNNNNNNNNNNNNNNNNNNNNNNNNNNNNNNNNNNNNNNNNNNNNNNNNNNN) shows a compositional bias: low complexity. Residues 275–291 (YGNVSDNSSPETNFSYA) show a composition bias toward polar residues. A compositionally biased stretch (low complexity) spans 292–334 (SPSSPSSTQSQSSPYEQQPLSPNPTISLSSSISVTATTTTRPN). A compositionally biased stretch (basic and acidic residues) spans 335–356 (ATEKTKESSLKSKSKSNEKDKE). Positions 415–478 (ALNYQFRKIK…DQYKLQEKQK (64 aa)) constitute a bZIP domain. Residues 421–436 (RKIKNRESARRSRERK) form a basic motif region. The interval 443–450 (LEAKIAEI) is leucine-zipper. A disordered region spans residues 670–693 (KNCNNNNENNNNNDNNKNSDDEKG). The span at 672–685 (CNNNNENNNNNDNN) shows a compositional bias: low complexity.

Belongs to the bZIP family.

The protein localises to the nucleus. Probable transcriptional regulator. The protein is Probable basic-leucine zipper transcription factor C (bzpC) of Dictyostelium discoideum (Social amoeba).